A 464-amino-acid chain; its full sequence is Trigger factor (464 aa).

One can recognise a PPIase FKBP-type domain in the interval 166-245 (GDFLTIDITA…VKAVKERELP (80 aa)). The disordered stretch occupies residues 426–464 (FVRPGGEEEAPAAEVTEADTAEGEATEVPAEDEKAEAKA). Positions 432-455 (EEEAPAAEVTEADTAEGEATEVPA) are enriched in acidic residues.

It belongs to the FKBP-type PPIase family. Tig subfamily.

Its subcellular location is the cytoplasm. The enzyme catalyses [protein]-peptidylproline (omega=180) = [protein]-peptidylproline (omega=0). Its function is as follows. Involved in protein export. Acts as a chaperone by maintaining the newly synthesized protein in an open conformation. Functions as a peptidyl-prolyl cis-trans isomerase. The sequence is that of Trigger factor from Pseudarthrobacter chlorophenolicus (strain ATCC 700700 / DSM 12829 / CIP 107037 / JCM 12360 / KCTC 9906 / NCIMB 13794 / A6) (Arthrobacter chlorophenolicus).